We begin with the raw amino-acid sequence, 315 residues long: MLDIIIAVIIDWIIGDPYWFPHPVIYIGKLIKMLEKLGRRFFKQDKWLLVFGGFIVIIVSSISFLIPFIILQGVKKFQVIYHVINIFFLWTVLAAKSLHKEGKKVYTALEKKDIEDARLKLSYIVGRQTEGLSKKEIIRADVETIAENSSDGIIAPLLFAMLGGAPLAMMYKGINTMDSMLGYMNFKYRYIGFFPAKIDDLFNFIPARVTGIIMCLVSPIIGGNIFYSIKIMLRDRKNHKSPNCAYPEAAAAAASGIMLGGTNIYFGEVVEKPTIGEEKNELSDFHITKTIILMYSSEILFIIIYVIIICFLGKH.

7 consecutive transmembrane segments (helical) span residues 1–21 (MLDI…YWFP), 50–70 (VFGG…PFII), 79–99 (VIYH…KSLH), 151–171 (DGII…AMMY), 209–229 (VTGI…FYSI), 250–270 (AAAA…GEVV), and 291–311 (IILM…IICF).

The protein belongs to the CobD/CbiB family.

It localises to the cell membrane. The protein operates within cofactor biosynthesis; adenosylcobalamin biosynthesis. Functionally, converts cobyric acid to cobinamide by the addition of aminopropanol on the F carboxylic group. The chain is Cobalamin biosynthesis protein CobD from Clostridium acetobutylicum (strain ATCC 824 / DSM 792 / JCM 1419 / IAM 19013 / LMG 5710 / NBRC 13948 / NRRL B-527 / VKM B-1787 / 2291 / W).